The primary structure comprises 788 residues: MLSLLKRAIGYTNERQLKKYMRVVEQINRMEPQMEKLTDAELRRKTDEFKEQLASGKSVNDIQVEAFAVVREVAKRVLGMRHFDVQLIGGLVLAEGNIAEMATGEGKTLVASLPSYLRALEGKGVHVITANDYLAKRDRNLIGQIHEFLGLTVGLNLPLMSPQEKKQAYQADITYGIGTEFGFDYLRDHMVYDASDKVQRPYHYAIIDEIDSVLIDEAKTPLIIAGKTRSSTELHYIAARLVKRFEREVDYIYDGETKTVNLTDEGIEKVEKAFGIDNLYDAEHQVLYHYVIQALRAHVLFQRDVDYIIRDGKVLLVDAFTGRVMEGRSLSDGLHQAIEAKEGLEITEENKTYASITIQNYFRMYPILSGMTGTAKTEEKEFQRIYGIDVIPIPTNRPKIRVDLPDRVYMTRHDKYVAVAKEVKRRHESGQPVLIGTTSILQSEEVAKYLDQEQVPYELLNAKTVEQEAEVIARAGQRGRVTIATNIAGRGTDILLGEGVNELGGLHVLGTERHESRRIDNQLKGRAGRQGDPGSSQFFISLEDDMFRRFAAEETEKLKAKLKTDETGCILNNDIHEFVDKVQRIVEGMNFSVREYNLKLDDVMNEQRNVIYQIRDRVLEENDRVALVVPMIRSACDRIVDAYALSEQIPEEWDVRRMTEELNRIVYRTPITFDQPPADLEDVKRKVAEAVESYVALLEKKKAHTQLQTLLKSVMLTVIDDYWMRHLDQMALLKEGIGLRHYQQEDPIRLYQKEGFEMFKAMYEVIEKEISVHTARLLQSLEQEEGQS.

Residues Q86, 104-108, and D493 contribute to the ATP site; that span reads GEGKT.

It belongs to the SecA family. Monomer and homodimer. Part of the essential Sec protein translocation apparatus which comprises SecA, SecYEG and auxiliary proteins SecDF. Other proteins may also be involved.

It is found in the cell membrane. It localises to the cytoplasm. It carries out the reaction ATP + H2O + cellular proteinSide 1 = ADP + phosphate + cellular proteinSide 2.. Part of the Sec protein translocase complex. Interacts with the SecYEG preprotein conducting channel. Has a central role in coupling the hydrolysis of ATP to the transfer of proteins into and across the cell membrane, serving as an ATP-driven molecular motor driving the stepwise translocation of polypeptide chains across the membrane. In Geobacillus thermodenitrificans (strain NG80-2), this protein is Protein translocase subunit SecA 2.